A 610-amino-acid polypeptide reads, in one-letter code: Fimbrin (610 aa).

2 consecutive EF-hand domains span residues 7 to 42 (SEISEFKASFNQFDENGDGQISALELQKILTKCGEK) and 43 to 78 (VTGVEVRDMIKEVDTDGNGSIDFKEFLQVMQKARQH). Ca(2+) contacts are provided by Asp20, Asn22, Asp24, Gln26, Glu31, Asp56, Asp58, Asn60, Ser62, and Glu67. Actin-binding regions lie at residues 102-365 (YSGS…NTHP) and 366-608 (ALEP…QVEM). Calponin-homology (CH) domains lie at 116 to 232 (DEEK…KIGL), 260 to 365 (LPVE…NTHP), 379 to 488 (TREE…RGHV), and 501 to 608 (PIAD…QVEM).

In terms of biological role, binds to actin. This is Fimbrin (fimA) from Dictyostelium discoideum (Social amoeba).